The sequence spans 135 residues: Flagellar assembly factor FliW 1 (135 aa).

It belongs to the FliW family. Interacts with translational regulator CsrA and flagellin(s).

It is found in the cytoplasm. In terms of biological role, acts as an anti-CsrA protein, binds CsrA and prevents it from repressing translation of its target genes, one of which is flagellin. Binds to flagellin and participates in the assembly of the flagellum. This Helicobacter pylori (strain ATCC 700392 / 26695) (Campylobacter pylori) protein is Flagellar assembly factor FliW 1.